The primary structure comprises 189 residues: MEVILLERVAKLGQMGETVKVRPGFARNYLLARGKALRATEANKKRFEDQRIQLEARNLERRNEAQAVAEKLDGQSFVLIRQSGETGVLYGSVSTRDLAEVLTQNGFTVGRDQFSLNQPIKTLGLHTVPVVLHPEVEVTVTVNVARSPEEAERQARGESTVVRDELDLEELGLEVGAALAEAGPEGEER.

Belongs to the bacterial ribosomal protein bL9 family.

Binds to the 23S rRNA. In Methylobacterium nodulans (strain LMG 21967 / CNCM I-2342 / ORS 2060), this protein is Large ribosomal subunit protein bL9.